The chain runs to 602 residues: Elongation factor 4 (602 aa).

The tr-type G domain maps to 2-184; it reads NHIRNFSIIA…AVVAKVPPPK (183 aa). Residues 14–19 and 131–134 each bind GTP; these read DHGKST and NKMD.

Belongs to the TRAFAC class translation factor GTPase superfamily. Classic translation factor GTPase family. LepA subfamily.

It localises to the cell inner membrane. The catalysed reaction is GTP + H2O = GDP + phosphate + H(+). In terms of biological role, required for accurate and efficient protein synthesis under certain stress conditions. May act as a fidelity factor of the translation reaction, by catalyzing a one-codon backward translocation of tRNAs on improperly translocated ribosomes. Back-translocation proceeds from a post-translocation (POST) complex to a pre-translocation (PRE) complex, thus giving elongation factor G a second chance to translocate the tRNAs correctly. Binds to ribosomes in a GTP-dependent manner. The chain is Elongation factor 4 from Delftia acidovorans (strain DSM 14801 / SPH-1).